We begin with the raw amino-acid sequence, 385 residues long: Sesquiterpene alcohol synthase (385 aa).

2 residues coordinate Mg(2+): Asp123 and Asp127. Residues 123-127 (DDISD) carry the DDXXD motif motif.

Belongs to the terpene synthase family. Mg(2+) serves as cofactor. Specifically expressed in tissues lining the cuticle of the abdominal sternites of mature males.

It carries out the reaction (2E,6E)-farnesyl diphosphate + H2O = (1S,6S,7R)-sesquipiperitol + diphosphate. It functions in the pathway pheromone biosynthesis. Functionally, sesquiterpene alcohol synthase that catalyzes the formation of (1S,6S,7R)-sesquipiperitol, a terpene intermediate in murgantiol biosynthesis, a male-released aggregation pheromone. This chain is Sesquiterpene alcohol synthase, found in Murgantia histrionica (Harlequin bug).